Reading from the N-terminus, the 887-residue chain is Alanine--tRNA ligase (887 aa).

Zn(2+)-binding residues include His-581, His-585, Cys-683, and His-687.

This sequence belongs to the class-II aminoacyl-tRNA synthetase family. Zn(2+) is required as a cofactor.

Its subcellular location is the cytoplasm. It catalyses the reaction tRNA(Ala) + L-alanine + ATP = L-alanyl-tRNA(Ala) + AMP + diphosphate. Catalyzes the attachment of alanine to tRNA(Ala) in a two-step reaction: alanine is first activated by ATP to form Ala-AMP and then transferred to the acceptor end of tRNA(Ala). Also edits incorrectly charged Ser-tRNA(Ala) and Gly-tRNA(Ala) via its editing domain. The sequence is that of Alanine--tRNA ligase from Ehrlichia ruminantium (strain Welgevonden).